Reading from the N-terminus, the 226-residue chain is 3-dehydroquinate dehydratase (226 aa).

3-dehydroquinate-binding positions include Ser9, 32-34 (EVR), and Arg59. Residue His119 is the Proton donor/acceptor of the active site. Lys146 (schiff-base intermediate with substrate) is an active-site residue. 3-dehydroquinate contacts are provided by Arg187, Thr208, and Gln212.

The protein belongs to the type-I 3-dehydroquinase family. Homodimer.

The enzyme catalyses 3-dehydroquinate = 3-dehydroshikimate + H2O. It functions in the pathway metabolic intermediate biosynthesis; chorismate biosynthesis; chorismate from D-erythrose 4-phosphate and phosphoenolpyruvate: step 3/7. Its function is as follows. Involved in the third step of the chorismate pathway, which leads to the biosynthesis of aromatic amino acids. Catalyzes the cis-dehydration of 3-dehydroquinate (DHQ) and introduces the first double bond of the aromatic ring to yield 3-dehydroshikimate. This Desulfotalea psychrophila (strain LSv54 / DSM 12343) protein is 3-dehydroquinate dehydratase.